The primary structure comprises 123 residues: WAP four-disulfide core domain protein 5 (123 aa).

The signal sequence occupies residues 1–24 (MRIQSLLLLGALLAVGSQPPAAFG). WAP domains follow at residues 27–73 (KGEK…CVPR) and 74–121 (VSVK…RDPV). 8 disulfides stabilise this stretch: Cys34–Cys62, Cys41–Cys66, Cys49–Cys61, Cys55–Cys70, Cys81–Cys109, Cys88–Cys113, Cys96–Cys108, and Cys102–Cys117.

It is found in the secreted. Its function is as follows. Putative acid-stable proteinase inhibitor. In Aotus nancymaae (Ma's night monkey), this protein is WAP four-disulfide core domain protein 5 (WFDC5).